We begin with the raw amino-acid sequence, 388 residues long: P2X receptor E (388 aa).

Residues 1-28 (MNFRNIDWDSLFSYSTIKIVRIRDKRLG) are Cytoplasmic-facing. Residues 29-49 (ILHFAFLIGIILYIIVGTIFL) traverse the membrane as a helical segment. The Lumenal portion of the chain corresponds to 50–312 (QKKYLVLESP…QLGQFDFQTM (263 aa)). The tract at residues 291–304 (RHGVRIIFIQTGQL) is pore-forming motif. A helical membrane pass occupies residues 313 to 333 (LLTFVSGIGLVTAASLIVDII). The Cytoplasmic segment spans residues 334 to 388 (ATRIMPQRSRYQELKFQDSSINNTQKTPTNDHTPLLKDNEDTINENSYQNNSYEK). The disordered stretch occupies residues 349–388 (FQDSSINNTQKTPTNDHTPLLKDNEDTINENSYQNNSYEK). Polar residues-rich tracts occupy residues 350-365 (QDSS…TNDH) and 377-388 (NENSYQNNSYEK).

It belongs to the P2X receptor family.

Its subcellular location is the contractile vacuole membrane. P2X receptors are ATP-gated ion channels that play a role in intracellular calcium signaling. Not required for the purinergic response to extracellular nucleotides. Not essential for osmoregulation. Inward currents evoked by intracellular ATP. ATP analog beta, gamma-imido-ATP is a weak partial agonist of p2xE. Exclusively selective for ATP over other nucleotides. Insensitive to copper and P2 receptor antagonists PPADS and suramin but strongly inhibited by sodium ions. More permeable to ammonium than either sodium or potassium ions and less permeable to choline. Permeable to calcium ions, but not chloride. The chain is P2X receptor E (p2xE) from Dictyostelium discoideum (Social amoeba).